We begin with the raw amino-acid sequence, 129 residues long: Insulin-like growth factor 2 (129 aa).

A signal peptide spans 1–24 (MGVPMGKSLLAPLTFLALASCCFA). The segment at 25–52 (AYRPSETLCGGELVDTLQFVCGDRGFYF) is b. Intrachain disulfides connect cysteine 33/cysteine 72, cysteine 45/cysteine 85, and cysteine 71/cysteine 76. The tract at residues 53–65 (SRPASRVSRRSSR) is c. The interval 66-86 (GIVEECCFRSCDLALLETYCA) is a. The d stretch occupies residues 87 to 92 (TPAKSE). Positions 93-129 (RDVSTPPTVLPDNFPRYPVGKFFQYDTWKQSAQRLRR) are cleaved as a propeptide — e peptide.

It belongs to the insulin family. Interacts with MYORG; this interaction is required for IGF2 secretion. Interacts with integrins ITGAV:ITGB3 and ITGA6:ITGB4; integrin-binding is required for IGF2 signaling. In terms of processing, proteolytically processed by PCSK4, proIGF2 is cleaved at Arg-129 and Arg-92 to generate big-IGF2 and mature IGF2.

It localises to the secreted. The insulin-like growth factors possess growth-promoting activity. Major fetal growth hormone in mammals. Plays a key role in regulating fetoplacental development. IGF2 is influenced by placental lactogen. Also involved in tissue differentiation. In adults, involved in glucose metabolism in adipose tissue, skeletal muscle and liver. Acts as a ligand for integrin which is required for IGF2 signaling. Positively regulates myogenic transcription factor MYOD1 function by facilitating the recruitment of transcriptional coactivators, thereby controlling muscle terminal differentiation. Inhibits myoblast differentiation and modulates metabolism via increasing the mitochondrial respiration rate. Functionally, preptin undergoes glucose-mediated co-secretion with insulin, and acts as a physiological amplifier of glucose-mediated insulin secretion. Exhibits osteogenic properties by increasing osteoblast mitogenic activity through phosphoactivation of MAPK1 and MAPK3. In Neovison vison (American mink), this protein is Insulin-like growth factor 2.